The primary structure comprises 408 residues: Argininosuccinate synthase (408 aa).

ATP contacts are provided by residues 10–18 (AYSGGLDTS) and Ala-37. The L-citrulline site is built by Tyr-90 and Ser-95. Gly-120 contributes to the ATP binding site. Residues Thr-122, Asn-126, and Asp-127 each contribute to the L-aspartate site. Residue Asn-126 coordinates L-citrulline. Arg-130, Ser-182, Ser-191, Glu-267, and Tyr-279 together coordinate L-citrulline.

This sequence belongs to the argininosuccinate synthase family. Type 1 subfamily. Homotetramer.

The protein resides in the cytoplasm. It catalyses the reaction L-citrulline + L-aspartate + ATP = 2-(N(omega)-L-arginino)succinate + AMP + diphosphate + H(+). It participates in amino-acid biosynthesis; L-arginine biosynthesis; L-arginine from L-ornithine and carbamoyl phosphate: step 2/3. The protein is Argininosuccinate synthase of Paraburkholderia xenovorans (strain LB400).